Here is a 214-residue protein sequence, read N- to C-terminus: Peptide methionine sulfoxide reductase B1, chloroplastic (214 aa).

A chloroplast-targeting transit peptide spans 1–53 (MAMRQYAAATAASSSFRARPRARPSCLPAAALPLAPCCGVAWSRASYRRASVR). Over residues 58–81 (ASSSSSSSSSSPSPQGQAQAQAQG) the composition is skewed to low complexity. A disordered region spans residues 58-91 (ASSSSSSSSSSPSPQGQAQAQAQGKPNYSTSLTD). A MsrB domain is found at 91–213 (DEEWRKRLTK…NSASLKLKKT (123 aa)). Positions 130, 133, 179, and 182 each coordinate Zn(2+). The active-site Nucleophile is the Cys202.

The protein belongs to the MsrB Met sulfoxide reductase family. The cofactor is Zn(2+). In terms of tissue distribution, expressed in leaves and flowers.

The protein localises to the plastid. It localises to the chloroplast. The enzyme catalyses L-methionyl-[protein] + [thioredoxin]-disulfide + H2O = L-methionyl-(R)-S-oxide-[protein] + [thioredoxin]-dithiol. Catalyzes the reduction of methionine sulfoxide (MetSO) to methionine in proteins. Involved in abiotic stress response. Plays a protective role against oxidative stress by restoring activity to proteins that have been inactivated by methionine oxidation. MSRB family specifically reduces the MetSO R-enantiomer. The polypeptide is Peptide methionine sulfoxide reductase B1, chloroplastic (Oryza sativa subsp. japonica (Rice)).